We begin with the raw amino-acid sequence, 281 residues long: Polyamine aminopropyltransferase (281 aa).

The PABS domain occupies 2-237 (EIWYTEKLEL…GIIGFTFLSN (236 aa)). Residue Gln-33 coordinates S-methyl-5'-thioadenosine. Positions 64 and 88 each coordinate spermidine. S-methyl-5'-thioadenosine contacts are provided by residues Glu-108 and 139–140 (DG). Asp-157 functions as the Proton acceptor in the catalytic mechanism. 157-160 (DSSD) provides a ligand contact to spermidine. Pro-164 provides a ligand contact to S-methyl-5'-thioadenosine.

Belongs to the spermidine/spermine synthase family. As to quaternary structure, homodimer or homotetramer.

The protein localises to the cytoplasm. The catalysed reaction is S-adenosyl 3-(methylsulfanyl)propylamine + putrescine = S-methyl-5'-thioadenosine + spermidine + H(+). Its pathway is amine and polyamine biosynthesis; spermidine biosynthesis; spermidine from putrescine: step 1/1. Catalyzes the irreversible transfer of a propylamine group from the amino donor S-adenosylmethioninamine (decarboxy-AdoMet) to putrescine (1,4-diaminobutane) to yield spermidine. In Leptospira biflexa serovar Patoc (strain Patoc 1 / Ames), this protein is Polyamine aminopropyltransferase.